We begin with the raw amino-acid sequence, 315 residues long: 4-diphosphocytidyl-2-C-methyl-D-erythritol kinase (315 aa).

Lys-10 is an active-site residue. 107-117 (PVAGGMAGGSA) lines the ATP pocket. Asp-148 is an active-site residue. The segment at 292-315 (HPATSPVPGPAKNRGAHIVSIESE) is disordered.

It belongs to the GHMP kinase family. IspE subfamily.

The enzyme catalyses 4-CDP-2-C-methyl-D-erythritol + ATP = 4-CDP-2-C-methyl-D-erythritol 2-phosphate + ADP + H(+). It functions in the pathway isoprenoid biosynthesis; isopentenyl diphosphate biosynthesis via DXP pathway; isopentenyl diphosphate from 1-deoxy-D-xylulose 5-phosphate: step 3/6. Functionally, catalyzes the phosphorylation of the position 2 hydroxy group of 4-diphosphocytidyl-2C-methyl-D-erythritol. The chain is 4-diphosphocytidyl-2-C-methyl-D-erythritol kinase from Corynebacterium efficiens (strain DSM 44549 / YS-314 / AJ 12310 / JCM 11189 / NBRC 100395).